Here is a 151-residue protein sequence, read N- to C-terminus: Probable flavodoxin 2 (151 aa).

The 141-residue stretch at 4–144 (ILLVYATMSG…ELINFGRQFA (141 aa)) folds into the Flavodoxin-like domain. FMN-binding positions include 10–14 (TMSGN) and 88–119 (VFGS…DIVL).

The protein belongs to the flavodoxin family. FMN serves as cofactor.

In terms of biological role, low-potential electron donor to a number of redox enzymes. The sequence is that of Probable flavodoxin 2 (ykuP) from Bacillus subtilis (strain 168).